Consider the following 162-residue polypeptide: Beta-carotene hydroxylase (162 aa).

A Fatty acid hydroxylase domain is found at 8–135 (VATVLVMELT…GRDHCVSFGF (128 aa)).

The protein belongs to the sterol desaturase family.

The catalysed reaction is all-trans-beta-carotene + 4 reduced [2Fe-2S]-[ferredoxin] + 2 O2 + 4 H(+) = all-trans-zeaxanthin + 4 oxidized [2Fe-2S]-[ferredoxin] + 2 H2O. The protein operates within carotenoid biosynthesis; astaxanthin biosynthesis. Its function is as follows. Catalyzes the hydroxylation reaction from beta-carotene to zeaxanthin via beta-cryptoxanthin. This is Beta-carotene hydroxylase (crtZ) from Paracoccus sp. (strain N81106 / MBIC 01143) (Agrobacterium aurantiacum).